A 600-amino-acid polypeptide reads, in one-letter code: Monooxygenase ptmN (600 aa).

Belongs to the FMO family. FAD is required as a cofactor.

It functions in the pathway secondary metabolite biosynthesis. In terms of biological role, monooxygenase; part of the gene cluster that mediates the biosynthesis of the indole diterpenes penitrems. The geranylgeranyl diphosphate (GGPP) synthase ptmG catalyzes the first step in penitrem biosynthesis via conversion of farnesyl pyrophosphate and isopentyl pyrophosphate into geranylgeranyl pyrophosphate (GGPP). Condensation of indole-3-glycerol phosphate with GGPP by the prenyl transferase ptmC then forms 3-geranylgeranylindole (3-GGI). Epoxidation by the FAD-dependent monooxygenase ptmM leads to a epoxidized-GGI that is substrate of the terpene cyclase ptmB for cyclization to yield paspaline. Paspaline is subsequently converted to 13-desoxypaxilline by the cytochrome P450 monooxygenase ptmP, the latter being then converted to paxilline by the cytochrome P450 monooxygenase ptmQ. Paxilline is converted to beta-paxitriol via C-10 ketoreduction by the short-chain dehydrogenase ptmH which can be monoprenylated at the C-20 by the indole diterpene prenyltransferase ptmD. A two-step elimination (acetylation and elimination) process performed by the O-acetyltransferase ptmV and ptmI leads to the production of the prenylated form of penijanthine. The FAD-linked oxidoreductase ptmO then converts the prenylated form of penijanthine into PC-M5 which is in turn transformed into PC-M4 by the aromatic dimethylallyltransferase ptmE. Five sequential oxidative transformations performed by the cytochrome P450 monooxygenases ptmK, ptmU, ptmL, ptmN and ptmJ yield the various penitrem compounds. PtmK, ptmU and ptmM are involved in the formation of the key bicyclic ring of penitrem C via the formation of the intermediates secopenitrem D and penitrem D. PtmL catalyzes the epoxidation of penitrem D and C to yield penitrem B and F, respectively. PtmJ catalyzes the last benzylic hydroxylation to convert penitrem B to prenitrem E and penitrem F to penitrem A. The chain is Monooxygenase ptmN from Penicillium ochrochloron.